Consider the following 117-residue polypeptide: Prefoldin subunit beta (117 aa).

This sequence belongs to the prefoldin subunit beta family. Heterohexamer of two alpha and four beta subunits.

Its subcellular location is the cytoplasm. Functionally, molecular chaperone capable of stabilizing a range of proteins. Seems to fulfill an ATP-independent, HSP70-like function in archaeal de novo protein folding. The chain is Prefoldin subunit beta from Thermococcus gammatolerans (strain DSM 15229 / JCM 11827 / EJ3).